A 483-amino-acid polypeptide reads, in one-letter code: Zinc metalloproteinase/disintegrin (483 aa).

The N-terminal stretch at 1–20 (MIQVLLVTICLAVFPYQGSS) is a signal peptide. Positions 21 to 190 (IILESGNVND…KASQLYLTPE (170 aa)) are excised as a propeptide. The region spanning 197-395 (RYIELAIVVD…RNPQCILNAP (199 aa)) is the Peptidase M12B domain. Residue glutamate 200 participates in Ca(2+) binding. Asparagine 263 is a glycosylation site (N-linked (GlcNAc...) asparagine). Residue aspartate 284 coordinates Ca(2+). N-linked (GlcNAc...) asparagine glycosylation is present at asparagine 293. 3 disulfide bridges follow: cysteine 308-cysteine 390, cysteine 352-cysteine 374, and cysteine 354-cysteine 357. Residue histidine 333 participates in Zn(2+) binding. The active site involves glutamate 334. The Zn(2+) site is built by histidine 337 and histidine 343. The Ca(2+) site is built by cysteine 390 and asparagine 393. A propeptide spanning residues 396–413 (LRTDTVSTPVSGNEFLEA) is cleaved from the precursor. Residues 403–483 (TPVSGNEFLE…SNDCPRWNDL (81 aa)) enclose the Disintegrin domain. 6 disulfide bridges follow: cysteine 417–cysteine 432, cysteine 419–cysteine 427, cysteine 426–cysteine 449, cysteine 440–cysteine 446, cysteine 445–cysteine 470, and cysteine 458–cysteine 477. Residues 462-464 (RGD) carry the Cell attachment site motif.

It belongs to the venom metalloproteinase (M12B) family. P-II subfamily. P-IIa sub-subfamily. In terms of assembly, monomeric (disintegrin). Requires Zn(2+) as cofactor. Expressed by the venom gland.

The protein resides in the secreted. Functionally, impairs hemostasis in the envenomed animal. Its function is as follows. Inhibits platelet aggregation induced by ADP, thrombin, platelet-activating factor and collagen. Acts by inhibiting fibrinogen interaction with platelet receptors GPIIb/GPIIIa (ITGA2B/ITGB3). The protein is Zinc metalloproteinase/disintegrin of Protobothrops flavoviridis (Habu).